The chain runs to 248 residues: tRNA (guanine-N(1)-)-methyltransferase (248 aa).

S-adenosyl-L-methionine is bound by residues Gly-126 and 150-155; that span reads LGDYVL. Residues 224–248 are disordered; sequence WRRTQQEERTRERRPDLWAAFDSED. Basic and acidic residues predominate over residues 227-239; the sequence is TQQEERTRERRPD.

The protein belongs to the RNA methyltransferase TrmD family. In terms of assembly, homodimer.

Its subcellular location is the cytoplasm. The catalysed reaction is guanosine(37) in tRNA + S-adenosyl-L-methionine = N(1)-methylguanosine(37) in tRNA + S-adenosyl-L-homocysteine + H(+). In terms of biological role, specifically methylates guanosine-37 in various tRNAs. This is tRNA (guanine-N(1)-)-methyltransferase from Micrococcus luteus (strain ATCC 4698 / DSM 20030 / JCM 1464 / CCM 169 / CCUG 5858 / IAM 1056 / NBRC 3333 / NCIMB 9278 / NCTC 2665 / VKM Ac-2230) (Micrococcus lysodeikticus).